The following is a 696-amino-acid chain: DNA ligase (696 aa).

NAD(+) is bound by residues 36 to 40, 85 to 86, and glutamate 124; these read DAVYD and SL. The active-site N6-AMP-lysine intermediate is the lysine 126. Residues arginine 147, glutamate 184, lysine 308, and lysine 332 each contribute to the NAD(+) site. 4 residues coordinate Zn(2+): cysteine 426, cysteine 429, cysteine 444, and cysteine 449. The 79-residue stretch at 618–696 folds into the BRCT domain; sequence QRTVSLQGQT…EEELLKLLAS (79 aa).

The protein belongs to the NAD-dependent DNA ligase family. LigA subfamily. Mg(2+) is required as a cofactor. It depends on Mn(2+) as a cofactor.

The catalysed reaction is NAD(+) + (deoxyribonucleotide)n-3'-hydroxyl + 5'-phospho-(deoxyribonucleotide)m = (deoxyribonucleotide)n+m + AMP + beta-nicotinamide D-nucleotide.. Its function is as follows. DNA ligase that catalyzes the formation of phosphodiester linkages between 5'-phosphoryl and 3'-hydroxyl groups in double-stranded DNA using NAD as a coenzyme and as the energy source for the reaction. It is essential for DNA replication and repair of damaged DNA. This Prochlorococcus marinus (strain MIT 9303) protein is DNA ligase.